Consider the following 240-residue polypeptide: UDP-2,3-diacylglucosamine hydrolase (240 aa).

Residues Asp-8, His-10, Asp-41, Asn-79, and His-114 each coordinate Mn(2+). Substrate is bound at residue 79–80 (NR). 5 residues coordinate substrate: Asp-122, Ser-160, Asn-164, Lys-167, and His-195. The Mn(2+) site is built by His-195 and His-197.

The protein belongs to the LpxH family. Mn(2+) is required as a cofactor.

The protein resides in the cell inner membrane. It catalyses the reaction UDP-2-N,3-O-bis[(3R)-3-hydroxytetradecanoyl]-alpha-D-glucosamine + H2O = 2-N,3-O-bis[(3R)-3-hydroxytetradecanoyl]-alpha-D-glucosaminyl 1-phosphate + UMP + 2 H(+). It participates in glycolipid biosynthesis; lipid IV(A) biosynthesis; lipid IV(A) from (3R)-3-hydroxytetradecanoyl-[acyl-carrier-protein] and UDP-N-acetyl-alpha-D-glucosamine: step 4/6. Hydrolyzes the pyrophosphate bond of UDP-2,3-diacylglucosamine to yield 2,3-diacylglucosamine 1-phosphate (lipid X) and UMP by catalyzing the attack of water at the alpha-P atom. Involved in the biosynthesis of lipid A, a phosphorylated glycolipid that anchors the lipopolysaccharide to the outer membrane of the cell. The polypeptide is UDP-2,3-diacylglucosamine hydrolase (Enterobacter sp. (strain 638)).